We begin with the raw amino-acid sequence, 345 residues long: S-adenosylmethionine:tRNA ribosyltransferase-isomerase (345 aa).

It belongs to the QueA family. As to quaternary structure, monomer.

It is found in the cytoplasm. It catalyses the reaction 7-aminomethyl-7-carbaguanosine(34) in tRNA + S-adenosyl-L-methionine = epoxyqueuosine(34) in tRNA + adenine + L-methionine + 2 H(+). The protein operates within tRNA modification; tRNA-queuosine biosynthesis. Its function is as follows. Transfers and isomerizes the ribose moiety from AdoMet to the 7-aminomethyl group of 7-deazaguanine (preQ1-tRNA) to give epoxyqueuosine (oQ-tRNA). The polypeptide is S-adenosylmethionine:tRNA ribosyltransferase-isomerase (Helicobacter pylori (strain J99 / ATCC 700824) (Campylobacter pylori J99)).